A 298-amino-acid polypeptide reads, in one-letter code: N-acetylmuramic acid 6-phosphate etherase (298 aa).

The 164-residue stretch at 54–217 folds into the SIS domain; sequence TIKAMKQGGR…STTVMIGLGK (164 aa). The Proton donor role is filled by Glu82. Residue Glu113 is part of the active site.

This sequence belongs to the GCKR-like family. MurNAc-6-P etherase subfamily. Homodimer.

It catalyses the reaction N-acetyl-D-muramate 6-phosphate + H2O = N-acetyl-D-glucosamine 6-phosphate + (R)-lactate. Its pathway is amino-sugar metabolism; N-acetylmuramate degradation. Functionally, specifically catalyzes the cleavage of the D-lactyl ether substituent of MurNAc 6-phosphate, producing GlcNAc 6-phosphate and D-lactate. In Halalkalibacterium halodurans (strain ATCC BAA-125 / DSM 18197 / FERM 7344 / JCM 9153 / C-125) (Bacillus halodurans), this protein is N-acetylmuramic acid 6-phosphate etherase.